The chain runs to 283 residues: Zinc-finger homeodomain protein 8 (283 aa).

A ZF-HD dimerization-type; degenerate zinc finger spans residues 23–68 (YKECMRNHAAAMGGQAFDGCGEYMPASPDSLKCAACGCHRSFHRRA). Disordered regions lie at residues 131-171 (AGRA…TKFT) and 244-283 (GLGT…PISV). Residues 148–161 (GSAGGSGSGGGGIF) are compositionally biased toward gly residues. Positions 163–226 (RKRFRTKFTP…NHKNQLASSP (64 aa)) form a DNA-binding region, homeobox. Over residues 244-256 (GLGTGLGTGISGD) the composition is skewed to gly residues. Residues 257 to 266 (GDGDDDDTDD) are compositionally biased toward acidic residues. The segment covering 269–283 (PRAAVSSPSPSPISV) has biased composition (low complexity).

As to quaternary structure, homo- and heterodimer with other ZFHD proteins.

It localises to the nucleus. Putative transcription factor. The sequence is that of Zinc-finger homeodomain protein 8 (ZHD8) from Oryza sativa subsp. japonica (Rice).